Consider the following 209-residue polypeptide: uncharacterized protein (209 aa).

Residues 1–17 (MKRLVTGLLALSLFLAA) form the signal peptide. Residues 17 to 105 (ACGQDSDQQK…SNNQANNNQK (89 aa)) are disordered. C18 is lipidated: N-palmitoyl cysteine. C18 carries the S-diacylglycerol cysteine lipid modification. Positions 23–70 (DQQKDSNKEKDDKAKTEQQDEKTNDSSKDKKDKKDDSKDVNKDNKDNS) are enriched in basic and acidic residues. The span at 71–105 (ANDNQQQSNSNATNNDQNQTNNNQSSNNQANNNQK) shows a compositional bias: low complexity.

Its subcellular location is the cell membrane. This is an uncharacterized protein from Staphylococcus aureus (strain bovine RF122 / ET3-1).